A 383-amino-acid polypeptide reads, in one-letter code: ATP phosphoribosyltransferase regulatory subunit (383 aa).

This sequence belongs to the class-II aminoacyl-tRNA synthetase family. HisZ subfamily. Heteromultimer composed of HisG and HisZ subunits.

The protein resides in the cytoplasm. Its pathway is amino-acid biosynthesis; L-histidine biosynthesis; L-histidine from 5-phospho-alpha-D-ribose 1-diphosphate: step 1/9. Functionally, required for the first step of histidine biosynthesis. May allow the feedback regulation of ATP phosphoribosyltransferase activity by histidine. This Neisseria gonorrhoeae (strain ATCC 700825 / FA 1090) protein is ATP phosphoribosyltransferase regulatory subunit.